A 164-amino-acid chain; its full sequence is Putative ankyrin repeat protein RBE_0585 (164 aa).

ANK repeat units lie at residues 42–107 (NQDT…VAIL) and 126–149 (DKDT…MLDY).

The protein is Putative ankyrin repeat protein RBE_0585 of Rickettsia bellii (strain RML369-C).